Here is an 80-residue protein sequence, read N- to C-terminus: Small ribosomal subunit protein uS17 (80 aa).

Belongs to the universal ribosomal protein uS17 family. As to quaternary structure, part of the 30S ribosomal subunit.

One of the primary rRNA binding proteins, it binds specifically to the 5'-end of 16S ribosomal RNA. The chain is Small ribosomal subunit protein uS17 from Brucella anthropi (strain ATCC 49188 / DSM 6882 / CCUG 24695 / JCM 21032 / LMG 3331 / NBRC 15819 / NCTC 12168 / Alc 37) (Ochrobactrum anthropi).